Reading from the N-terminus, the 619-residue chain is TOX high mobility group box family member 4 (619 aa).

Disordered regions lie at residues 155 to 227 and 306 to 335; these read LSLG…QKPV and DPVPQSQTPSPPPVTAADPASPAPASTESP. T176 carries the post-translational modification Phosphothreonine. Phosphoserine occurs at positions 178 and 182. Basic and acidic residues predominate over residues 183 to 193; sequence LHEDGVDDFRR. Residues 208 to 218 are compositionally biased toward basic residues; sequence KQKAPKKRKKK. Positions 213-218 match the Nuclear localization signal motif; it reads KKRKKK. Positions 223 to 291 form a DNA-binding region, HMG box; the sequence is PQKPVSAYAL…EYLKALAAYK (69 aa). T313 carries the post-translational modification Phosphothreonine. S315 is subject to Phosphoserine. Positions 320 to 335 are enriched in low complexity; sequence TAADPASPAPASTESP. The residue at position 479 (R479) is an Asymmetric dimethylarginine. 6 positions are modified to phosphoserine: S531, S548, S550, S558, S560, and S565.

Component of the PNUTS-PP1 phosphatase complex, composed of PPP1R10/PNUTS, TOX4, WDR82 and PPP1CA or PPP1CB or PPP1CC. Interacts with PPP1R10/PNUTS. Interacts with FOXO1 and CREB1 (increased by cAMP); FOXO1 and CREB1 are required for full induction of TOX4-dependent activity and the interactions are inhibited by insulin.

Its subcellular location is the nucleus. The protein resides in the chromosome. With respect to regulation, in liver, recruited to target gene promoters following treatment with dexamethasone and cAMP. Binding is decreased in presence of insulin. Functionally, transcription factor that modulates cell fate reprogramming from the somatic state to the pluripotent and neuronal fate. In liver, controls the expression of hormone-regulated gluconeogenic genes such as G6PC1 and PCK1. This regulation is independent of the insulin receptor activation. Also acts as a regulatory component of protein phosphatase 1 (PP1) complexes. Component of the PNUTS-PP1 protein phosphatase complex, a PP1 complex that regulates RNA polymerase II transcription pause-release. PNUTS-PP1 also plays a role in the control of chromatin structure and cell cycle progression during the transition from mitosis into interphase. The chain is TOX high mobility group box family member 4 from Mus musculus (Mouse).